The chain runs to 191 residues: Peptidyl-tRNA hydrolase (191 aa).

Position 16 (Tyr16) interacts with tRNA. His21 acts as the Proton acceptor in catalysis. Positions 67, 69, and 115 each coordinate tRNA.

It belongs to the PTH family. Monomer.

Its subcellular location is the cytoplasm. It catalyses the reaction an N-acyl-L-alpha-aminoacyl-tRNA + H2O = an N-acyl-L-amino acid + a tRNA + H(+). Functionally, hydrolyzes ribosome-free peptidyl-tRNAs (with 1 or more amino acids incorporated), which drop off the ribosome during protein synthesis, or as a result of ribosome stalling. Catalyzes the release of premature peptidyl moieties from peptidyl-tRNA molecules trapped in stalled 50S ribosomal subunits, and thus maintains levels of free tRNAs and 50S ribosomes. This is Peptidyl-tRNA hydrolase from Ruthia magnifica subsp. Calyptogena magnifica.